The following is a 116-amino-acid chain: Large ribosomal subunit protein bL17 (116 aa).

The protein belongs to the bacterial ribosomal protein bL17 family. Part of the 50S ribosomal subunit. Contacts protein L32.

The chain is Large ribosomal subunit protein bL17 from Helicobacter pylori (strain G27).